A 253-amino-acid polypeptide reads, in one-letter code: Pupal cuticle protein (253 aa).

Residues 1 to 18 (MKSMIVVACLALACGAHA) form the signal peptide. Positions 54-66 (LQQASKNNPNPND) are enriched in polar residues. The disordered stretch occupies residues 54–74 (LQQASKNNPNPNDDGSYDPRW). 3 tandem repeats follow at residues 97-100 (AAPA), 115-118 (AAPA), and 154-157 (AAPA). Residues 155-167 (APAQQQWNAPAHQ) show a composition bias toward low complexity. 2 disordered regions span residues 155–178 (APAQ…QDWN) and 187–206 (APAH…APAH). The segment covering 189 to 201 (AHQSWNGAPSWQS) has biased composition (polar residues).

In terms of biological role, component of the cuticle of the pupae of silk moth. This chain is Pupal cuticle protein (PCP), found in Bombyx mori (Silk moth).